Consider the following 282-residue polypeptide: Nucleotide-binding protein Fnod_1159 (282 aa).

An ATP-binding site is contributed by 9–16; sequence GHSGAGKS. Residue 57–60 coordinates GTP; the sequence is DIRS.

The protein belongs to the RapZ-like family.

Functionally, displays ATPase and GTPase activities. The chain is Nucleotide-binding protein Fnod_1159 from Fervidobacterium nodosum (strain ATCC 35602 / DSM 5306 / Rt17-B1).